A 92-amino-acid chain; its full sequence is Translation initiation factor IF-1 (92 aa).

The region spanning 1 to 72 (MAKEELIQFE…EKGRLIFRHK (72 aa)) is the S1-like domain. A disordered region spans residues 69 to 92 (FRHKDERPGGPPRSGPPRGQFRRR).

It belongs to the IF-1 family. Component of the 30S ribosomal translation pre-initiation complex which assembles on the 30S ribosome in the order IF-2 and IF-3, IF-1 and N-formylmethionyl-tRNA(fMet); mRNA recruitment can occur at any time during PIC assembly.

It localises to the cytoplasm. Functionally, one of the essential components for the initiation of protein synthesis. Stabilizes the binding of IF-2 and IF-3 on the 30S subunit to which N-formylmethionyl-tRNA(fMet) subsequently binds. Helps modulate mRNA selection, yielding the 30S pre-initiation complex (PIC). Upon addition of the 50S ribosomal subunit IF-1, IF-2 and IF-3 are released leaving the mature 70S translation initiation complex. This Rhodopseudomonas palustris (strain ATCC BAA-98 / CGA009) protein is Translation initiation factor IF-1.